Consider the following 393-residue polypeptide: Putative acid--amine ligase HI_0929 (393 aa).

103–105 is an ATP binding site; the sequence is RFD. 3 residues coordinate Mg(2+): D105, E117, and N119. Residues K267, K303, G310, Q343, and 378 to 380 contribute to the ATP site; that span reads AVT.

This sequence belongs to the glutathionylspermidine synthase preATP-grasp family.

Its function is as follows. May be a ligase forming an amide bond. Shows ATPase activity. This Haemophilus influenzae (strain ATCC 51907 / DSM 11121 / KW20 / Rd) protein is Putative acid--amine ligase HI_0929.